A 169-amino-acid polypeptide reads, in one-letter code: ATP synthase subunit b (169 aa).

Residues 12–32 traverse the membrane as a helical segment; that stretch reads PSVGLIFWKTVAFLIFLYILY. Residues 69–107 are disordered; it reads AENEEARREAEQKAQQILREARDSAEELREEEKAKTRRE. Over residues 87 to 107 the composition is skewed to basic and acidic residues; the sequence is REARDSAEELREEEKAKTRRE.

The protein belongs to the ATPase B chain family. As to quaternary structure, F-type ATPases have 2 components, F(1) - the catalytic core - and F(0) - the membrane proton channel. F(1) has five subunits: alpha(3), beta(3), gamma(1), delta(1), epsilon(1). F(0) has three main subunits: a(1), b(2) and c(10-14). The alpha and beta chains form an alternating ring which encloses part of the gamma chain. F(1) is attached to F(0) by a central stalk formed by the gamma and epsilon chains, while a peripheral stalk is formed by the delta and b chains.

The protein resides in the cell inner membrane. Functionally, f(1)F(0) ATP synthase produces ATP from ADP in the presence of a proton or sodium gradient. F-type ATPases consist of two structural domains, F(1) containing the extramembraneous catalytic core and F(0) containing the membrane proton channel, linked together by a central stalk and a peripheral stalk. During catalysis, ATP synthesis in the catalytic domain of F(1) is coupled via a rotary mechanism of the central stalk subunits to proton translocation. In terms of biological role, component of the F(0) channel, it forms part of the peripheral stalk, linking F(1) to F(0). In Salinibacter ruber (strain DSM 13855 / M31), this protein is ATP synthase subunit b.